Consider the following 447-residue polypeptide: N-succinylarginine dihydrolase (447 aa).

Residues 19–28 (AGLSFGNKAS), N110, and 137–138 (HR) each bind substrate. E174 is a catalytic residue. R212 is a binding site for substrate. H248 is an active-site residue. Substrate-binding residues include D250 and N359. The Nucleophile role is filled by C365.

It belongs to the succinylarginine dihydrolase family. Homodimer.

It catalyses the reaction N(2)-succinyl-L-arginine + 2 H2O + 2 H(+) = N(2)-succinyl-L-ornithine + 2 NH4(+) + CO2. The protein operates within amino-acid degradation; L-arginine degradation via AST pathway; L-glutamate and succinate from L-arginine: step 2/5. In terms of biological role, catalyzes the hydrolysis of N(2)-succinylarginine into N(2)-succinylornithine, ammonia and CO(2). In Escherichia coli O157:H7, this protein is N-succinylarginine dihydrolase.